Consider the following 391-residue polypeptide: 1-deoxy-D-xylulose 5-phosphate reductoisomerase (391 aa).

Positions 10, 11, 12, 13, 38, and 122 each coordinate NADPH. Position 123 (K123) interacts with 1-deoxy-D-xylulose 5-phosphate. Residue E124 coordinates NADPH. D148 serves as a coordination point for Mn(2+). S149, E150, S173, and H196 together coordinate 1-deoxy-D-xylulose 5-phosphate. Mn(2+) is bound at residue E150. G202 lines the NADPH pocket. 1-deoxy-D-xylulose 5-phosphate contacts are provided by S209, N214, K215, and E218. Mn(2+) is bound at residue E218.

The protein belongs to the DXR family. Mg(2+) is required as a cofactor. The cofactor is Mn(2+).

The enzyme catalyses 2-C-methyl-D-erythritol 4-phosphate + NADP(+) = 1-deoxy-D-xylulose 5-phosphate + NADPH + H(+). The protein operates within isoprenoid biosynthesis; isopentenyl diphosphate biosynthesis via DXP pathway; isopentenyl diphosphate from 1-deoxy-D-xylulose 5-phosphate: step 1/6. Catalyzes the NADPH-dependent rearrangement and reduction of 1-deoxy-D-xylulose-5-phosphate (DXP) to 2-C-methyl-D-erythritol 4-phosphate (MEP). This Wolbachia pipientis subsp. Culex pipiens (strain wPip) protein is 1-deoxy-D-xylulose 5-phosphate reductoisomerase.